The following is a 389-amino-acid chain: MEMKDYIFTSESVSEGHPDKVADQVSDAILDAILTQDKRARVACETLVTTGMAVIAGEITTTAVVDYPKVVRETIKEIGYNDSAMGFDWETCAVLVSIDKQSPDISQGVTEGEGMFKEQGAGDQGLMFGYACNETPELMPMTIMYSHRLTQKLAEVRKNGTLDFLRPDSKSQVSIQYVDDRPVRVDTVVISSQHTPEVSYETIKEGIIEEVVKKIIPVELMDDKTRFLINPTGRFVIGGPMGDCGLTGRKIIVDSYGGHGAHGGGAFSGKDPSKVDRSAAYMGRYVAKNLVAAGLCERCEVQVAYAIGVAEPVSVMVDTAGTGKIPSARIAEIIREVFDLRPRAIIEQLDLLRPIYRKTAAYGHFGRELPEFTWERTDKIDIIRQKAGI.

His17 serves as a coordination point for ATP. Asp19 contacts Mg(2+). Glu45 is a binding site for K(+). Residues Glu58 and Gln101 each contribute to the L-methionine site. Positions 101–111 (QSPDISQGVTE) are flexible loop. ATP contacts are provided by residues 168-170 (DSK), 234-235 (RF), Asp243, 249-250 (RK), Ala266, and Lys270. Residue Asp243 coordinates L-methionine. Lys274 contributes to the L-methionine binding site.

Belongs to the AdoMet synthase family. As to quaternary structure, homotetramer; dimer of dimers. It depends on Mg(2+) as a cofactor. The cofactor is K(+).

Its subcellular location is the cytoplasm. The catalysed reaction is L-methionine + ATP + H2O = S-adenosyl-L-methionine + phosphate + diphosphate. Its pathway is amino-acid biosynthesis; S-adenosyl-L-methionine biosynthesis; S-adenosyl-L-methionine from L-methionine: step 1/1. Its function is as follows. Catalyzes the formation of S-adenosylmethionine (AdoMet) from methionine and ATP. The overall synthetic reaction is composed of two sequential steps, AdoMet formation and the subsequent tripolyphosphate hydrolysis which occurs prior to release of AdoMet from the enzyme. The polypeptide is S-adenosylmethionine synthase (Geobacter sulfurreducens (strain ATCC 51573 / DSM 12127 / PCA)).